Consider the following 96-residue polypeptide: Co-chaperonin GroES (96 aa).

This sequence belongs to the GroES chaperonin family. As to quaternary structure, heptamer of 7 subunits arranged in a ring. Interacts with the chaperonin GroEL.

Its subcellular location is the cytoplasm. In terms of biological role, together with the chaperonin GroEL, plays an essential role in assisting protein folding. The GroEL-GroES system forms a nano-cage that allows encapsulation of the non-native substrate proteins and provides a physical environment optimized to promote and accelerate protein folding. GroES binds to the apical surface of the GroEL ring, thereby capping the opening of the GroEL channel. In Neisseria meningitidis serogroup A / serotype 4A (strain DSM 15465 / Z2491), this protein is Co-chaperonin GroES.